A 541-amino-acid polypeptide reads, in one-letter code: Membrane protein insertase YidC (541 aa).

5 consecutive transmembrane segments (helical) span residues 6–26, 356–376, 430–450, 463–483, and 498–518; these read FFLIIAIFLSIFLLWDKWEIT, IIHSWGYSIIILTLLIKLAFY, LPILVQIPVFISLYWVLLEMV, LSAPDPYYILPLIMGISMFIQ, and IMMALPFVFTIFFLWFPSGLV.

This sequence belongs to the OXA1/ALB3/YidC family. Type 1 subfamily. Interacts with the Sec translocase complex via SecD. Specifically interacts with transmembrane segments of nascent integral membrane proteins during membrane integration.

It is found in the cell inner membrane. Functionally, required for the insertion and/or proper folding and/or complex formation of integral membrane proteins into the membrane. Involved in integration of membrane proteins that insert both dependently and independently of the Sec translocase complex, as well as at least some lipoproteins. Aids folding of multispanning membrane proteins. The protein is Membrane protein insertase YidC of Vesicomyosocius okutanii subsp. Calyptogena okutanii (strain HA).